The chain runs to 107 residues: Iron-sulfur cluster assembly protein CyaY (107 aa).

The protein belongs to the frataxin family.

In terms of biological role, involved in iron-sulfur (Fe-S) cluster assembly. May act as a regulator of Fe-S biogenesis. The protein is Iron-sulfur cluster assembly protein CyaY of Neisseria meningitidis serogroup C / serotype 2a (strain ATCC 700532 / DSM 15464 / FAM18).